Reading from the N-terminus, the 338-residue chain is 3-isopropylmalate dehydrogenase (338 aa).

Substrate-binding residues include R88, R98, R122, and D212. Mg(2+) contacts are provided by D212, D236, and D240. Residue 272-284 coordinates NAD(+); that stretch reads GSAPDIAGQGIAD.

It belongs to the isocitrate and isopropylmalate dehydrogenases family. LeuB type 2 subfamily. In terms of assembly, homodimer. It depends on Mg(2+) as a cofactor. The cofactor is Mn(2+).

It is found in the cytoplasm. The enzyme catalyses (2R,3S)-3-isopropylmalate + NAD(+) = 4-methyl-2-oxopentanoate + CO2 + NADH. The protein operates within amino-acid biosynthesis; L-leucine biosynthesis; L-leucine from 3-methyl-2-oxobutanoate: step 3/4. Its function is as follows. Catalyzes the oxidation of 3-carboxy-2-hydroxy-4-methylpentanoate (3-isopropylmalate) to 3-carboxy-4-methyl-2-oxopentanoate. The product decarboxylates to 4-methyl-2 oxopentanoate. This Corynebacterium jeikeium (strain K411) protein is 3-isopropylmalate dehydrogenase.